Here is a 299-residue protein sequence, read N- to C-terminus: DNA-binding transcriptional repressor CapW (299 aa).

The disordered stretch occupies residues 1–22 (MTDESKPTDDQPTSKGRQGARW). Positions 1 to 95 (MTDESKPTDD…SFKAVFPSSA (95 aa)) are winged HTH domain. A WYL domain region spans residues 96-207 (VERYLDDLLR…LTRIKCCKYV (112 aa)). The 81-residue stretch at 131–211 (GRRLNADIVG…KCCKYVGQDR (81 aa)) folds into the WYL domain. The tract at residues 156-200 (YQSLTDPEGGERMLSPHALVHDGNRWHVRAYCHKRKAFRDFSLTR) is probable ligand-binding region. The segment at 208-299 (GQDRDRADED…RDEIKDLIQY (92 aa)) is WCX domain.

In terms of assembly, homodimer.

In terms of biological role, transcriptional regulator of a CBASS antivirus system. CBASS (cyclic oligonucleotide-based antiphage signaling system) provides immunity against bacteriophage. The CD-NTase protein synthesizes cyclic nucleotides in response to infection; these serve as specific second messenger signals. The signals activate a diverse range of effectors, leading to bacterial cell death and thus abortive phage infection. A type III CBASS system, part of a Cap17-CapW-CdnC-Cap7-Cap6-Cap18 locus. Binds specifically to palindromes that overlap the -10 site in the promoter of cdnC, found between the genes for divergently transcribed capW and cdnC (cognate DNA). Probably represses transcription bidirectionally from the promoter. In Pseudomonas aeruginosa, this protein is DNA-binding transcriptional repressor CapW.